The sequence spans 228 residues: Cytochrome c oxidase subunit 2 (228 aa).

Over M1–S14 the chain is Mitochondrial intermembrane. Residues P15–M45 traverse the membrane as a helical segment. Residues L46 to Q59 lie on the Mitochondrial matrix side of the membrane. Residues E60–M87 traverse the membrane as a helical segment. Residues D88–Q228 lie on the Mitochondrial intermembrane side of the membrane. Cu cation is bound by residues H161, C196, E198, C200, H204, and M207. Mg(2+) is bound at residue E198. At Y218 the chain carries Phosphotyrosine.

This sequence belongs to the cytochrome c oxidase subunit 2 family. In terms of assembly, component of the cytochrome c oxidase (complex IV, CIV), a multisubunit enzyme composed of 14 subunits. The complex is composed of a catalytic core of 3 subunits MT-CO1, MT-CO2 and MT-CO3, encoded in the mitochondrial DNA, and 11 supernumerary subunits COX4I, COX5A, COX5B, COX6A, COX6B, COX6C, COX7A, COX7B, COX7C, COX8 and NDUFA4, which are encoded in the nuclear genome. The complex exists as a monomer or a dimer and forms supercomplexes (SCs) in the inner mitochondrial membrane with NADH-ubiquinone oxidoreductase (complex I, CI) and ubiquinol-cytochrome c oxidoreductase (cytochrome b-c1 complex, complex III, CIII), resulting in different assemblies (supercomplex SCI(1)III(2)IV(1) and megacomplex MCI(2)III(2)IV(2)). Found in a complex with TMEM177, COA6, COX18, COX20, SCO1 and SCO2. Interacts with TMEM177 in a COX20-dependent manner. Interacts with COX20. Interacts with COX16. The cofactor is Cu cation.

Its subcellular location is the mitochondrion inner membrane. The enzyme catalyses 4 Fe(II)-[cytochrome c] + O2 + 8 H(+)(in) = 4 Fe(III)-[cytochrome c] + 2 H2O + 4 H(+)(out). In terms of biological role, component of the cytochrome c oxidase, the last enzyme in the mitochondrial electron transport chain which drives oxidative phosphorylation. The respiratory chain contains 3 multisubunit complexes succinate dehydrogenase (complex II, CII), ubiquinol-cytochrome c oxidoreductase (cytochrome b-c1 complex, complex III, CIII) and cytochrome c oxidase (complex IV, CIV), that cooperate to transfer electrons derived from NADH and succinate to molecular oxygen, creating an electrochemical gradient over the inner membrane that drives transmembrane transport and the ATP synthase. Cytochrome c oxidase is the component of the respiratory chain that catalyzes the reduction of oxygen to water. Electrons originating from reduced cytochrome c in the intermembrane space (IMS) are transferred via the dinuclear copper A center (CU(A)) of subunit 2 and heme A of subunit 1 to the active site in subunit 1, a binuclear center (BNC) formed by heme A3 and copper B (CU(B)). The BNC reduces molecular oxygen to 2 water molecules using 4 electrons from cytochrome c in the IMS and 4 protons from the mitochondrial matrix. The protein is Cytochrome c oxidase subunit 2 (MT-CO2) of Loxodonta africana (African elephant).